The primary structure comprises 265 residues: ClpXP adapter protein SpxH (265 aa).

It belongs to the SpxH family. As to quaternary structure, interacts with Spx.

Its subcellular location is the cytoplasm. Its function is as follows. Adapter protein required for efficient degradation of Spx by ClpXP under non-stress conditions. Interaction with Spx stabilizes Spx and exposes the C-terminus of Spx for recognition and proteolysis by ClpXP. The chain is ClpXP adapter protein SpxH from Staphylococcus epidermidis (strain ATCC 35984 / DSM 28319 / BCRC 17069 / CCUG 31568 / BM 3577 / RP62A).